Consider the following 103-residue polypeptide: NADH-quinone oxidoreductase subunit K (103 aa).

3 helical membrane passes run 7–27 (TEHG…GVLV), 31–51 (LIFM…AFIV), and 65–85 (FMLI…LILL).

It belongs to the complex I subunit 4L family. As to quaternary structure, NDH-1 is composed of 14 different subunits. Subunits NuoA, H, J, K, L, M, N constitute the membrane sector of the complex.

It is found in the cell inner membrane. The catalysed reaction is a quinone + NADH + 5 H(+)(in) = a quinol + NAD(+) + 4 H(+)(out). Functionally, NDH-1 shuttles electrons from NADH, via FMN and iron-sulfur (Fe-S) centers, to quinones in the respiratory chain. The immediate electron acceptor for the enzyme in this species is believed to be ubiquinone. Couples the redox reaction to proton translocation (for every two electrons transferred, four hydrogen ions are translocated across the cytoplasmic membrane), and thus conserves the redox energy in a proton gradient. The sequence is that of NADH-quinone oxidoreductase subunit K from Nitrosococcus oceani (strain ATCC 19707 / BCRC 17464 / JCM 30415 / NCIMB 11848 / C-107).